Reading from the N-terminus, the 92-residue chain is CRISPR-associated endoribonuclease Cas2 (92 aa).

Residue D9 participates in Mg(2+) binding.

This sequence belongs to the CRISPR-associated endoribonuclease Cas2 protein family. As to quaternary structure, homodimer, forms a heterotetramer with a Cas1 homodimer. Requires Mg(2+) as cofactor.

In terms of biological role, CRISPR (clustered regularly interspaced short palindromic repeat), is an adaptive immune system that provides protection against mobile genetic elements (viruses, transposable elements and conjugative plasmids). CRISPR clusters contain sequences complementary to antecedent mobile elements and target invading nucleic acids. CRISPR clusters are transcribed and processed into CRISPR RNA (crRNA). Functions as a ssRNA-specific endoribonuclease. Involved in the integration of spacer DNA into the CRISPR cassette. The polypeptide is CRISPR-associated endoribonuclease Cas2 (Aeropyrum pernix (strain ATCC 700893 / DSM 11879 / JCM 9820 / NBRC 100138 / K1)).